The sequence spans 265 residues: uncharacterized protein (265 aa).

It belongs to the MG067/MG068/MG395 family.

This is an uncharacterized protein from Mycoplasma pneumoniae (strain ATCC 29342 / M129 / Subtype 1) (Mycoplasmoides pneumoniae).